A 312-amino-acid polypeptide reads, in one-letter code: Olfactory receptor 51B2 (312 aa).

The Extracellular portion of the chain corresponds to 1-23 (MWPNITAAPFLLTGFPGLEAAHH). Residue N4 is glycosylated (N-linked (GlcNAc...) asparagine). The helical transmembrane segment at 24-44 (WISIPFFAVYVCILLGNGMLL) threads the bilayer. The Cytoplasmic segment spans residues 45 to 52 (YLIKHDHS). Residues 53 to 73 (LHEPMYYFLTMLAGTDLMVTL) traverse the membrane as a helical segment. At 74–97 (TTMPTVMGILWVNHREISSVGCFL) the chain is on the extracellular side. C95 and C187 are oxidised to a cystine. Residues 98-118 (QAYFIHSLSVVESGSLLAMAY) traverse the membrane as a helical segment. The Cytoplasmic portion of the chain corresponds to 119-137 (DCFIAIRNPLRYASILTNT). A helical membrane pass occupies residues 138–158 (RVIALGVGVFLRGFVSILPVI). At 159 to 194 (LRLFSFSYCKSHVITRAFCLHQEIMRLACADITFNR) the chain is on the extracellular side. A helical transmembrane segment spans residues 195-215 (LYPVILISLTIFLDCLIILFS). The Cytoplasmic portion of the chain corresponds to 216-235 (YILILNTVIGIASGEERAKA). Residues 236–256 (LNTCISHISCVLIFYVTVMGL) traverse the membrane as a helical segment. The Extracellular segment spans residues 257-271 (TFIYRFGKNVPEVVH). A helical transmembrane segment spans residues 272–292 (IIMSYIYFLFPPLMNPVIYSI). The Cytoplasmic segment spans residues 293 to 312 (KTKQIQYGIIRLLSKHRFSS).

The protein belongs to the G-protein coupled receptor 1 family. Ubiquitinated by the CRL2(FEM1A) and CRL2(FEM1C) complexes, which recognize the -Lys-Xaa-Xaa-Arg C-degron at the C-terminus, leading to its degradation.

It localises to the cell membrane. Its function is as follows. Odorant receptor. The chain is Olfactory receptor 51B2 (OR51B2) from Homo sapiens (Human).